The sequence spans 308 residues: UDP-N-acetylenolpyruvoylglucosamine reductase (308 aa).

Positions Arg-22–Gly-185 constitute an FAD-binding PCMH-type domain. The active site involves Arg-165. Positions Gln-197–Ser-211 are enriched in basic and acidic residues. The segment at Gln-197–Ala-228 is disordered. Residues Ala-212–Gly-226 are compositionally biased toward polar residues. Ser-214 functions as the Proton donor in the catalytic mechanism. Residue Glu-296 is part of the active site.

This sequence belongs to the MurB family. It depends on FAD as a cofactor.

It is found in the cytoplasm. It catalyses the reaction UDP-N-acetyl-alpha-D-muramate + NADP(+) = UDP-N-acetyl-3-O-(1-carboxyvinyl)-alpha-D-glucosamine + NADPH + H(+). It functions in the pathway cell wall biogenesis; peptidoglycan biosynthesis. Its function is as follows. Cell wall formation. The protein is UDP-N-acetylenolpyruvoylglucosamine reductase of Cereibacter sphaeroides (strain ATCC 17023 / DSM 158 / JCM 6121 / CCUG 31486 / LMG 2827 / NBRC 12203 / NCIMB 8253 / ATH 2.4.1.) (Rhodobacter sphaeroides).